A 233-amino-acid chain; its full sequence is Large ribosomal subunit protein uL1 (233 aa).

The protein belongs to the universal ribosomal protein uL1 family. Part of the 50S ribosomal subunit.

In terms of biological role, binds directly to 23S rRNA. The L1 stalk is quite mobile in the ribosome, and is involved in E site tRNA release. Its function is as follows. Protein L1 is also a translational repressor protein, it controls the translation of the L11 operon by binding to its mRNA. In Psychrobacter arcticus (strain DSM 17307 / VKM B-2377 / 273-4), this protein is Large ribosomal subunit protein uL1.